Here is a 149-residue protein sequence, read N- to C-terminus: Chromophore lyase CpcS/CpeS homolog (149 aa).

This sequence belongs to the CpcS/CpeS biliprotein lyase family.

The protein localises to the plastid. It localises to the chloroplast. Functionally, might function to covalently attach a chromophore to Cys residue(s) of phycobiliproteins. This chain is Chromophore lyase CpcS/CpeS homolog, found in Pyropia yezoensis (Susabi-nori).